The following is a 242-amino-acid chain: MSKSRLTVFSFVRRFLLRLMVVLAIFWGGGIALFSVAPVPFSAVMVERQVSAWLHGNFRYVAHSDWVSMDQISPWMGLAVIAAEDQKFPEHWGFDVASIEQALAHNERNENRIRGASTISQQTAKNLFLWDGRSWVRKGLEAGLTLGIETVWSKKRILAVYLNIAEFGDGVFGVEAAAQRYFHKPASKLTRSEAALLAAVLPNPLRFKVSAPSGYVRSRQAWILRQMYQLGGEPFMQQHQLD.

Residues 19–39 (LMVVLAIFWGGGIALFSVAPV) form a helical membrane-spanning segment.

The protein belongs to the glycosyltransferase 51 family.

The protein resides in the cell inner membrane. It catalyses the reaction [GlcNAc-(1-&gt;4)-Mur2Ac(oyl-L-Ala-gamma-D-Glu-L-Lys-D-Ala-D-Ala)](n)-di-trans,octa-cis-undecaprenyl diphosphate + beta-D-GlcNAc-(1-&gt;4)-Mur2Ac(oyl-L-Ala-gamma-D-Glu-L-Lys-D-Ala-D-Ala)-di-trans,octa-cis-undecaprenyl diphosphate = [GlcNAc-(1-&gt;4)-Mur2Ac(oyl-L-Ala-gamma-D-Glu-L-Lys-D-Ala-D-Ala)](n+1)-di-trans,octa-cis-undecaprenyl diphosphate + di-trans,octa-cis-undecaprenyl diphosphate + H(+). The protein operates within cell wall biogenesis; peptidoglycan biosynthesis. Functionally, peptidoglycan polymerase that catalyzes glycan chain elongation from lipid-linked precursors. The chain is Biosynthetic peptidoglycan transglycosylase from Escherichia coli O81 (strain ED1a).